A 186-amino-acid polypeptide reads, in one-letter code: MIEASKLKAGMTFETADGKLIRVLEASHHKPGKGNTIMRMKLRDVRTGSTFDTSYRPEEKFEQAIIETVPAQYLYKMDDTAYFMNNETYDQYEIPTVNIENELLYILENSEVKIQFYGTEVIGVQIPTTVELTVAETQPSIKGATVTGSGKPATMETGLVVNVPDFIEAGQKLVINTAEGTYVSRA.

Belongs to the elongation factor P family.

The protein localises to the cytoplasm. It functions in the pathway protein biosynthesis; polypeptide chain elongation. Its function is as follows. Involved in peptide bond synthesis. Stimulates efficient translation and peptide-bond synthesis on native or reconstituted 70S ribosomes in vitro. Probably functions indirectly by altering the affinity of the ribosome for aminoacyl-tRNA, thus increasing their reactivity as acceptors for peptidyl transferase. In Streptococcus agalactiae serotype Ia (strain ATCC 27591 / A909 / CDC SS700), this protein is Elongation factor P.